Reading from the N-terminus, the 105-residue chain is Thioredoxin (105 aa).

Residues 2 to 103 enclose the Thioredoxin domain; the sequence is VKQIESKSAF…KEKLEATIKG (102 aa). N6-acetyllysine is present on K3. K8 carries the N6-succinyllysine modification. Residues C32 and C35 each act as nucleophile in the active site. Cysteines 32 and 35 form a disulfide. K39 is modified (N6-acetyllysine). An S-nitrosocysteine mark is found at C62 and C69. C73 carries the post-translational modification S-nitrosocysteine; alternate. K94 carries the post-translational modification N6-acetyllysine; alternate. Position 94 is an N6-succinyllysine; alternate (K94).

The protein belongs to the thioredoxin family. Homodimer; disulfide-linked. Interacts with TXNIP through the redox-active site. Interacts with MAP3K5 and CASP3. Interacts with APEX1; the interaction stimulates the FOS/JUN AP-1 DNA-binding activity in a redox-dependent manner. Post-translationally, in the fully reduced protein, both Cys-69 and Cys-73 are nitrosylated in response to nitric oxide (NO). When two disulfide bonds are present in the protein, only Cys-73 is nitrosylated. Cys-73 can serve as donor for nitrosylation of target proteins.

Its subcellular location is the nucleus. It localises to the cytoplasm. The protein resides in the secreted. In terms of biological role, participates in various redox reactions through the reversible oxidation of its active center dithiol to a disulfide and catalyzes dithiol-disulfide exchange reactions. Plays a role in the reversible S-nitrosylation of cysteine residues in target proteins, and thereby contributes to the response to intracellular nitric oxide. Nitrosylates the active site Cys of CASP3 in response to nitric oxide (NO), and thereby inhibits caspase-3 activity. Induces the FOS/JUN AP-1 DNA binding activity in ionizing radiation (IR) cells through its oxidation/reduction status and stimulates AP-1 transcriptional activity. In Equus caballus (Horse), this protein is Thioredoxin (TXN).